Here is a 314-residue protein sequence, read N- to C-terminus: Small ribosomal subunit biogenesis GTPase RsgA (314 aa).

The tract at residues 1 to 21 (MKRAPTKQPAKPAARGGERAQ) is disordered. Residues 85–246 (SDQFKSKLFA…LIDSPGFQEF (162 aa)) enclose the CP-type G domain. GTP-binding positions include 134–137 (NKID) and 188–196 (GQSGMGKST). Cys270, Cys275, His277, and Cys283 together coordinate Zn(2+).

This sequence belongs to the TRAFAC class YlqF/YawG GTPase family. RsgA subfamily. Monomer. Associates with 30S ribosomal subunit, binds 16S rRNA. Requires Zn(2+) as cofactor.

The protein localises to the cytoplasm. Its function is as follows. One of several proteins that assist in the late maturation steps of the functional core of the 30S ribosomal subunit. Helps release RbfA from mature subunits. May play a role in the assembly of ribosomal proteins into the subunit. Circularly permuted GTPase that catalyzes slow GTP hydrolysis, GTPase activity is stimulated by the 30S ribosomal subunit. In Burkholderia mallei (strain ATCC 23344), this protein is Small ribosomal subunit biogenesis GTPase RsgA.